The sequence spans 256 residues: Geranylgeranylglyceryl phosphate synthase (256 aa).

Mg(2+) is bound by residues D28 and S53. Residues 172 to 178 (YLEAGSG), 203 to 204 (GG), and 225 to 226 (GT) each bind sn-glycerol 1-phosphate.

The protein belongs to the GGGP/HepGP synthase family. Group II subfamily. It depends on Mg(2+) as a cofactor.

The protein resides in the cytoplasm. It catalyses the reaction sn-glycerol 1-phosphate + (2E,6E,10E)-geranylgeranyl diphosphate = sn-3-O-(geranylgeranyl)glycerol 1-phosphate + diphosphate. The protein operates within membrane lipid metabolism; glycerophospholipid metabolism. In terms of biological role, prenyltransferase that catalyzes the transfer of the geranylgeranyl moiety of geranylgeranyl diphosphate (GGPP) to the C3 hydroxyl of sn-glycerol-1-phosphate (G1P). This reaction is the first ether-bond-formation step in the biosynthesis of archaeal membrane lipids. The chain is Geranylgeranylglyceryl phosphate synthase from Methanococcus maripaludis (strain DSM 14266 / JCM 13030 / NBRC 101832 / S2 / LL).